The primary structure comprises 1818 residues: U3 small nucleolar RNA-associated protein 10 (1818 aa).

Residues 568–588 (TDFYLLIPLILLALFDNSKLI) form a helical membrane-spanning segment. An HEAT repeat occupies 1778–1816 (LVPYIAELLEDDDEEVEMEVRRGLVRVIENVLGEPLDRY).

This sequence belongs to the HEATR1/UTP10 family. In terms of assembly, component of the ribosomal small subunit (SSU) processome.

The protein resides in the nucleus. The protein localises to the nucleolus. It is found in the membrane. Involved in nucleolar processing of pre-18S ribosomal RNA. Involved in ribosome biosynthesis. The polypeptide is U3 small nucleolar RNA-associated protein 10 (Candida albicans (strain SC5314 / ATCC MYA-2876) (Yeast)).